Here is a 325-residue protein sequence, read N- to C-terminus: DNA-directed RNA polymerase subunit alpha (325 aa).

The alpha N-terminal domain (alpha-NTD) stretch occupies residues Met1–Glu231. Residues Ile246–Lys325 are alpha C-terminal domain (alpha-CTD).

The protein belongs to the RNA polymerase alpha chain family. In terms of assembly, homodimer. The RNAP catalytic core consists of 2 alpha, 1 beta, 1 beta' and 1 omega subunit. When a sigma factor is associated with the core the holoenzyme is formed, which can initiate transcription.

The catalysed reaction is RNA(n) + a ribonucleoside 5'-triphosphate = RNA(n+1) + diphosphate. In terms of biological role, DNA-dependent RNA polymerase catalyzes the transcription of DNA into RNA using the four ribonucleoside triphosphates as substrates. The polypeptide is DNA-directed RNA polymerase subunit alpha (Paraburkholderia phymatum (strain DSM 17167 / CIP 108236 / LMG 21445 / STM815) (Burkholderia phymatum)).